The primary structure comprises 379 residues: Cytochrome b (379 aa).

4 helical membrane-spanning segments follow: residues 33–53 (FGSLLGMCLVIQILTGLFLAM), 77–98 (WLIRYLHANGASMFFICLFIHV), 113–133 (WNIGIILLLTTMATAFVGYVL), and 178–198 (FFAFHFILPFIIAAFALVHLL). Positions 83 and 97 each coordinate heme b. Heme b-binding residues include H182 and H196. H201 contributes to the a ubiquinone binding site. 4 helical membrane-spanning segments follow: residues 226-246 (IKDLLGIFLLLLVLMTLALFF), 288-308 (LGGVLALVLSILILAAFPLLN), 320-340 (VTQTIYWIFIANLLVLTWIGG), and 347-367 (FTTIGQIASITYFTIIIILIP).

The protein belongs to the cytochrome b family. In terms of assembly, the cytochrome bc1 complex contains 11 subunits: 3 respiratory subunits (MT-CYB, CYC1 and UQCRFS1), 2 core proteins (UQCRC1 and UQCRC2) and 6 low-molecular weight proteins (UQCRH/QCR6, UQCRB/QCR7, UQCRQ/QCR8, UQCR10/QCR9, UQCR11/QCR10 and a cleavage product of UQCRFS1). This cytochrome bc1 complex then forms a dimer. Requires heme b as cofactor.

Its subcellular location is the mitochondrion inner membrane. Functionally, component of the ubiquinol-cytochrome c reductase complex (complex III or cytochrome b-c1 complex) that is part of the mitochondrial respiratory chain. The b-c1 complex mediates electron transfer from ubiquinol to cytochrome c. Contributes to the generation of a proton gradient across the mitochondrial membrane that is then used for ATP synthesis. The protein is Cytochrome b (MT-CYB) of Akodon lindberghi (Lindbergh's grass mouse).